Here is a 20-residue protein sequence, read N- to C-terminus: Protein PR-L1 (20 aa).

This sequence belongs to the BetVI family.

In Lupinus luteus (European yellow lupine), this protein is Protein PR-L1.